Reading from the N-terminus, the 606-residue chain is Glutamine--fructose-6-phosphate aminotransferase [isomerizing] (606 aa).

Residue Cys2 is the Nucleophile; for GATase activity of the active site. Residues 2–217 (CGIIGIVGKE…EGDYVALDHD (216 aa)) enclose the Glutamine amidotransferase type-2 domain. SIS domains lie at 280–421 (VPGD…ARGT) and 454–596 (IAAD…VDQP). Lys601 functions as the For Fru-6P isomerization activity in the catalytic mechanism.

As to quaternary structure, homodimer.

The protein localises to the cytoplasm. The catalysed reaction is D-fructose 6-phosphate + L-glutamine = D-glucosamine 6-phosphate + L-glutamate. Functionally, catalyzes the first step in hexosamine metabolism, converting fructose-6P into glucosamine-6P using glutamine as a nitrogen source. The chain is Glutamine--fructose-6-phosphate aminotransferase [isomerizing] from Caulobacter vibrioides (strain ATCC 19089 / CIP 103742 / CB 15) (Caulobacter crescentus).